A 768-amino-acid polypeptide reads, in one-letter code: Cullin-3-A (768 aa).

Residues 677 to 698 (VAAKQGESDPERKETRQKVDDD) are disordered. Over residues 682–698 (GESDPERKETRQKVDDD) the composition is skewed to basic and acidic residues. In terms of domain architecture, Cullin neddylation spans 698 to 760 (DRKHEIEAAI…REYLARTPED (63 aa)). A Glycyl lysine isopeptide (Lys-Gly) (interchain with G-Cter in NEDD8) cross-link involves residue K712.

It belongs to the cullin family. As to quaternary structure, component of multiple BCR (BTB-CUL3-RBX1) E3 ubiquitin-protein ligase complexes formed of cul3, rbx1 and a variable BTB domain-containing protein acting as both, adapter to cullin and substrate recognition subunit. Interacts with btbd6. Neddylated. Attachment of NEDD8 is required for the E3 ubiquitin-protein ligase activity of the SCF-like complex.

Its subcellular location is the nucleus. It participates in protein modification; protein ubiquitination. Functionally, probable core component of cullin-based SCF-like E3 ubiquitin-protein ligase complexes which mediate the ubiquitination and subsequent proteasomal degradation of target proteins. The E3 ubiquitin-protein ligase activity of the complex is dependent on the neddylation of the cullin subunit. Involved in ER-Golgi transport by regulating the size of COPII coats, thereby playing a key role in collagen export, which is required for embryonic stem (ES) cells division. May play a role in the regulation of mittotic entry via ubiquitination of aurka. The chain is Cullin-3-A (cul3a) from Xenopus laevis (African clawed frog).